Here is a 451-residue protein sequence, read N- to C-terminus: Methionine aminopeptidase 2-2 (451 aa).

Positions M1–P97 are disordered. The segment covering T19–P28 has biased composition (polar residues). Positions E35–G45 are enriched in acidic residues. The span at K60 to A73 shows a compositional bias: basic residues. Positions G74–S83 are enriched in low complexity. H204 contacts substrate. Residues D224, D235, and H304 each contribute to the a divalent metal cation site. Residue H312 participates in substrate binding. A divalent metal cation-binding residues include E337 and E432.

The protein belongs to the peptidase M24A family. Methionine aminopeptidase eukaryotic type 2 subfamily. The cofactor is Co(2+). Zn(2+) serves as cofactor. It depends on Mn(2+) as a cofactor. Requires Fe(2+) as cofactor.

It localises to the cytoplasm. It catalyses the reaction Release of N-terminal amino acids, preferentially methionine, from peptides and arylamides.. Functionally, cotranslationally removes the N-terminal methionine from nascent proteins. The N-terminal methionine is often cleaved when the second residue in the primary sequence is small and uncharged (Met-Ala-, Cys, Gly, Pro, Ser, Thr, or Val). The protein is Methionine aminopeptidase 2-2 of Leptosphaeria maculans (strain JN3 / isolate v23.1.3 / race Av1-4-5-6-7-8) (Blackleg fungus).